A 104-amino-acid chain; its full sequence is ATP synthase subunit c (104 aa).

2 helical membrane passes run 37–57 and 83–103; these read LLGA…QGAV and AGIA…LIFV.

Belongs to the ATPase C chain family. In terms of assembly, F-type ATPases have 2 components, F(1) - the catalytic core - and F(0) - the membrane proton channel. F(1) has five subunits: alpha(3), beta(3), gamma(1), delta(1), epsilon(1). F(0) has three main subunits: a(1), b(2) and c(10-14). The alpha and beta chains form an alternating ring which encloses part of the gamma chain. F(1) is attached to F(0) by a central stalk formed by the gamma and epsilon chains, while a peripheral stalk is formed by the delta and b chains.

It localises to the cell membrane. Functionally, f(1)F(0) ATP synthase produces ATP from ADP in the presence of a proton or sodium gradient. F-type ATPases consist of two structural domains, F(1) containing the extramembraneous catalytic core and F(0) containing the membrane proton channel, linked together by a central stalk and a peripheral stalk. During catalysis, ATP synthesis in the catalytic domain of F(1) is coupled via a rotary mechanism of the central stalk subunits to proton translocation. Its function is as follows. Key component of the F(0) channel; it plays a direct role in translocation across the membrane. A homomeric c-ring of between 10-14 subunits forms the central stalk rotor element with the F(1) delta and epsilon subunits. This chain is ATP synthase subunit c, found in Mesoplasma florum (strain ATCC 33453 / NBRC 100688 / NCTC 11704 / L1) (Acholeplasma florum).